Here is a 355-residue protein sequence, read N- to C-terminus: Ribosomal RNA small subunit methyltransferase H (355 aa).

S-adenosyl-L-methionine-binding positions include 47–49, Asp65, Phe92, Asp113, and Gln120; that span reads GGY. The tract at residues 332 to 355 is disordered; sequence LLPLATLPETSHPKSASHSKSRRR. The segment covering 346–355 has biased composition (basic residues); that stretch reads SASHSKSRRR.

Belongs to the methyltransferase superfamily. RsmH family.

Its subcellular location is the cytoplasm. It catalyses the reaction cytidine(1402) in 16S rRNA + S-adenosyl-L-methionine = N(4)-methylcytidine(1402) in 16S rRNA + S-adenosyl-L-homocysteine + H(+). Specifically methylates the N4 position of cytidine in position 1402 (C1402) of 16S rRNA. In Beijerinckia indica subsp. indica (strain ATCC 9039 / DSM 1715 / NCIMB 8712), this protein is Ribosomal RNA small subunit methyltransferase H.